Reading from the N-terminus, the 179-residue chain is Large ribosomal subunit protein uL6 (179 aa).

The protein belongs to the universal ribosomal protein uL6 family. Part of the 50S ribosomal subunit.

Its function is as follows. This protein binds to the 23S rRNA, and is important in its secondary structure. It is located near the subunit interface in the base of the L7/L12 stalk, and near the tRNA binding site of the peptidyltransferase center. This chain is Large ribosomal subunit protein uL6, found in Desulfovibrio desulfuricans (strain ATCC 27774 / DSM 6949 / MB).